Reading from the N-terminus, the 1264-residue chain is Imitation switch two complex protein 1 (1264 aa).

One can recognise a WAC domain in the interval 23-130 (VQVWHIEETG…GEVVYLRKQK (108 aa)). Disordered regions lie at residues 130 to 153 (KDSS…VEIN), 275 to 374 (PVVA…PANA), 482 to 508 (QEIE…NPSD), 627 to 655 (ATEV…SEER), and 803 to 825 (LNKT…SESN). A compositionally biased stretch (low complexity) spans 132 to 147 (SSTTSSNSQQSTPQPD). 2 stretches are compositionally biased toward polar residues: residues 280–289 (RSNSANVSSP) and 299–310 (KSSGKSNTSNDA). The DDT domain occupies 423 to 483 (FDSFGKLLQA…IRTQTSKEQE (61 aa)).

In terms of assembly, component of the ISW2 complex, which at least consists of ISW2, ITC1, DLS1 and DPB4. May form a stable subcomplex with ISW2.

Its subcellular location is the nucleus. In terms of biological role, functions as a component of the ISW2 complex, which acts in remodeling the chromatin by catalyzing an ATP-dependent alteration in the structure of nucleosomal DNA. The ISW2 complex is involved in coordinating transcriptional repression and in inheritance of telomeric silencing. It is involved in repression of MAT a-specific genes, INO1, and early meiotic genes during mitotic growth dependent upon transcription factor UME6 and in a parallel pathway to the RPD3-SIN3 histone deacetylase complex. ITC1 is required for nucleosome-stimulated ATPase activity and chromatin-remodeling activity of the complex. Required for the repression of MATa a-specific genes. This Saccharomyces cerevisiae (strain ATCC 204508 / S288c) (Baker's yeast) protein is Imitation switch two complex protein 1 (ITC1).